A 501-amino-acid chain; its full sequence is Cytochrome P450 monooxygenase esdpH (501 aa).

A helical transmembrane segment spans residues 5 to 22 (RVGILIIGVLATATFWLC). Cys-446 contacts heme.

This sequence belongs to the cytochrome P450 family. Heme is required as a cofactor.

It is found in the membrane. The protein operates within secondary metabolite biosynthesis; terpenoid biosynthesis. Cytochrome P450 monooxygenase; part of the cluster that mediates the biosynthesis of shearones, diterpenoid pyrones (DPs) which are structurally diverse meroterpenoids consisting of a diterpene linked by a pyrone, and which may exhibit a range of bioactivities. Whitin the pathway, esdpH takes part in the molecular scaffold modification via the hydroxylation at C-6' and can transform shearone C into shearone E, shearone D into shearone F, and shearone H into shearone I, the latter being the final product of the pathway. The molecular scaffold is commonly biosynthesized by a series of enzymes including the non-reducing polyketide synthase (NR-PKS) esdpA that generates an alpha-pyrone; the prenyltransferase esdpC that attaches a geranylgeranyl pyrophosphate (GGPP) produced by the GGPP synthase (GGPPS) esdpD onto the pyrone unit; the FAD-dependent monooxygenase esdpE that converts an olefin on the diterpene unit into an epoxide; and the terpene cyclase esdpB that catalyzes the cyclization reactions to give the molecular backbone shearone A. In the modification steps, esdpF oxidizes the hydroxy group to a ketone at C-3 and esdpG then attaches hydroxy groups at both C-11 and C-12. After that, esdpI hydroxylates at C-20 and esdpH hydroxylates at C-6'. The ether bridge is generated by nucleophilic attack of the hydroxy group at C-20 to the carbonyl carbon at C-3. EsdpH can also functions prior to esdpI. The different combinations of these modification enzymes lead to the production of diverse shearone derivatives, shearone I being the end product of the pathway. The alpha-ketoglutarate-dependent dioxygenase esdpJ seems not to be involved in this pathway. This chain is Cytochrome P450 monooxygenase esdpH, found in Penicillium shearii (Eupenicillium shearii).